Reading from the N-terminus, the 99-residue chain is Integration host factor subunit beta (99 aa).

The protein belongs to the bacterial histone-like protein family. In terms of assembly, heterodimer of an alpha and a beta chain.

Functionally, this protein is one of the two subunits of integration host factor, a specific DNA-binding protein that functions in genetic recombination as well as in transcriptional and translational control. The chain is Integration host factor subunit beta from Laribacter hongkongensis (strain HLHK9).